The sequence spans 482 residues: NADH-quinone oxidoreductase subunit N (482 aa).

Helical transmembrane passes span 10–30 (ALGPALPELILTVGALVLILY), 44–64 (VGAIIVLIVALFSVVSQPLGA), 77–97 (GFARVMKTLTLVGSLAALLLA), 113–133 (ILIVLSSIGMLIMASANDLIG), 166–186 (FVLGALSSGMLLYGASLVYGF), 206–226 (LGLVLGIVFVAAGVAFKLAAV), 243–265 (VTAFFASAPKMAAMAMTVRVFIG), 277–296 (IIVFIAIASMALGSFAAIGQ), 302–322 (LMAYSSIGNVGYALIGLAAGT), 328–348 (GVVVYMAIYLAMTLGAFAVIL), 374–394 (AFCLAMMMFSLAGIPPLAGFF), 397–417 (FYVFAAAIKAGLNVLAVIGVV), and 451–471 (IVLAASSVVVVLFWIVPAPLV).

This sequence belongs to the complex I subunit 2 family. NDH-1 is composed of 14 different subunits. Subunits NuoA, H, J, K, L, M, N constitute the membrane sector of the complex.

Its subcellular location is the cell inner membrane. The enzyme catalyses a quinone + NADH + 5 H(+)(in) = a quinol + NAD(+) + 4 H(+)(out). In terms of biological role, NDH-1 shuttles electrons from NADH, via FMN and iron-sulfur (Fe-S) centers, to quinones in the respiratory chain. The immediate electron acceptor for the enzyme in this species is believed to be ubiquinone. Couples the redox reaction to proton translocation (for every two electrons transferred, four hydrogen ions are translocated across the cytoplasmic membrane), and thus conserves the redox energy in a proton gradient. In Methylobacterium nodulans (strain LMG 21967 / CNCM I-2342 / ORS 2060), this protein is NADH-quinone oxidoreductase subunit N.